Here is a 317-residue protein sequence, read N- to C-terminus: Taste receptor type 2 member 14 (317 aa).

At 1–7 (MGGVIKS) the chain is on the extracellular side. A helical transmembrane segment spans residues 8-28 (IFTFVLIVEFIIGNLGNSFIA). Over 29–55 (LVNCIDWVKGRKISSVDRILTALAISK) the chain is Cytoplasmic. The chain crosses the membrane as a helical span at residues 56 to 76 (ISLVWLIFGSWCVSVFFPALF). Over 77–87 (ATEKMFRMLTN) the chain is Extracellular. Residues Thr86 and Trp89 each contribute to the cholesterol site. The helical transmembrane segment at 88-108 (IWTVINHFSVWLATGLGTFYF) threads the bilayer. At 109 to 129 (LKIANFSNSIFLYLKWRVKKV) the chain is on the cytoplasmic side. Residues 130–150 (VLVLLLVTSVFLFLNIALINI) form a helical membrane-spanning segment. Topologically, residues 151-184 (HINASINGYRRNKTCSSDSSNFTRFSSLIVLTST) are extracellular. N-linked (GlcNAc...) asparagine glycosylation is found at Asn153, Asn162, and Asn171. Val180 is a binding site for cholesterol. Residues 185-205 (VFIFIPFTLSLAMFLLLIFSX) form a helical membrane-spanning segment. Residues 206–232 (WKHRKKMQHTVKRSGDASTKAHRGVKS) lie on the Cytoplasmic side of the membrane. Residues 233 to 253 (VXTFFLLYAIFCLSFFISVWT) form a helical membrane-spanning segment. The Extracellular segment spans residues 254 to 261 (SERLEENL). Residues 262–282 (IILSQVMGMAYPSCHSCVLIL) form a helical membrane-spanning segment. 2 residues coordinate cholesterol: Ser265 and Met268. Residues 283 to 317 (GNKKLRQASLSVLLWLRYMFKDGEPSGHKEFRESS) lie on the Cytoplasmic side of the membrane.

Belongs to the G-protein coupled receptor T2R family. Core component of the TAS2R14-GNAI1 complex, consisting of TAS2R14, GNAI1, GNB1 and GNG2; within the complex interacts with GNAI1. Core component of the TAS2R14-GNAT3 complex, consisting of TAS2R14, GNAT3, GNB1 and GNG2; within the complex interacts with GNAT3. Core component of the TAS2R14-GNAS2 complex, consisting of TAS2R14, GNAS2, GNB1 and GNG2; within the complex interacts with GNAS2.

It is found in the membrane. The catalysed reaction is Ca(2+)(in) = Ca(2+)(out). It catalyses the reaction 3',5'-cyclic AMP(in) = 3',5'-cyclic AMP(out). Basal activity is enhanced by binding to bitter tastants, such as flufenamic acid and aristolochic acid. Regulated by cholesterol in a concentration-dependent manner. Its function is as follows. Gustducin-linked G-protein coupled receptor that plays a role in the perception of bitterness. The activity of this receptor stimulates GNAT3, activating the gustducin G-protein pathway. Likely plays a role in sensing the chemical composition of the gastrointestinal content and other extra-oral tissues via the inhibitory G-protein pathways. The protein is Taste receptor type 2 member 14 (TAS2R14) of Pan troglodytes (Chimpanzee).